The chain runs to 484 residues: Glutamate--tRNA ligase (484 aa).

The short motif at 11–21 is the 'HIGH' region element; sequence PSPTGYLHIGN. A 'KMSKS' region motif is present at residues 252-256; sequence KLSKR. K255 contributes to the ATP binding site.

The protein belongs to the class-I aminoacyl-tRNA synthetase family. Glutamate--tRNA ligase type 1 subfamily. As to quaternary structure, monomer.

The protein localises to the cytoplasm. It carries out the reaction tRNA(Glu) + L-glutamate + ATP = L-glutamyl-tRNA(Glu) + AMP + diphosphate. In terms of biological role, catalyzes the attachment of glutamate to tRNA(Glu) in a two-step reaction: glutamate is first activated by ATP to form Glu-AMP and then transferred to the acceptor end of tRNA(Glu). This is Glutamate--tRNA ligase from Staphylococcus haemolyticus (strain JCSC1435).